The following is a 472-amino-acid chain: uncharacterized protein (472 aa).

14 helical membrane-spanning segments follow: residues 14–34 (VIVG…TLLI), 53–73 (WLTT…AFLI), 80–100 (ALLI…AFAP), 113–133 (AAGA…IFPI), 142–162 (MVGL…GWAV), 169–189 (SLFY…SILM), 202–222 (ILSV…FSSV), 227–247 (WSSS…LLFI), 263–283 (FTFG…ALLI), 302–322 (FDTG…SPII), 333–353 (GLAI…MQLT), 359–379 (AWIV…MMPV), 405–427 (VGGS…HAGT), and 437–457 (GMNA…LLSF).

Belongs to the major facilitator superfamily. EmrB family.

The protein resides in the cell membrane. This is an uncharacterized protein from Bacillus subtilis (strain 168).